Reading from the N-terminus, the 64-residue chain is Alpha-mammal toxin AnCra1 (64 aa).

An LCN-type CS-alpha/beta domain is found at 2-64 (KDGYIVDDVN…VRTKGPGRCN (63 aa)). 4 cysteine pairs are disulfide-bonded: Cys-12–Cys-63, Cys-16–Cys-36, Cys-22–Cys-46, and Cys-26–Cys-48.

Belongs to the long (4 C-C) scorpion toxin superfamily. Sodium channel inhibitor family. Alpha subfamily. Expressed by the venom gland.

Its subcellular location is the secreted. Alpha toxins bind voltage-independently at site-3 of sodium channels (Nav) and inhibit the inactivation of the activated channels, thereby blocking neuronal transmission. This toxin is active against mammals. The recombinant toxin selectively inhibits the fast inactivation of hNav1.7/SCN9A channel (EC(50)=136.7 nM). Is potent in inhibiting the fast inactivation of hNav1.7 and has little effect on the steady-state inactivation. In vivo, intravenous injection into mice induces muscle contraction, leading to severe paralysis and death. The sequence is that of Alpha-mammal toxin AnCra1 from Androctonus crassicauda (Arabian fat-tailed scorpion).